A 203-amino-acid polypeptide reads, in one-letter code: Molybdenum cofactor guanylyltransferase (203 aa).

Residues 12–14 (LAG), Lys-25, Asn-53, Asp-71, and Asp-101 contribute to the GTP site. Asp-101 lines the Mg(2+) pocket.

Belongs to the MobA family. In terms of assembly, monomer. Requires Mg(2+) as cofactor.

The protein resides in the cytoplasm. It carries out the reaction Mo-molybdopterin + GTP + H(+) = Mo-molybdopterin guanine dinucleotide + diphosphate. Functionally, transfers a GMP moiety from GTP to Mo-molybdopterin (Mo-MPT) cofactor (Moco or molybdenum cofactor) to form Mo-molybdopterin guanine dinucleotide (Mo-MGD) cofactor. The chain is Molybdenum cofactor guanylyltransferase from Cupriavidus metallidurans (strain ATCC 43123 / DSM 2839 / NBRC 102507 / CH34) (Ralstonia metallidurans).